The primary structure comprises 186 residues: Crossover junction endodeoxyribonuclease RuvC (186 aa).

Active-site residues include Asp-14, Glu-73, and Asp-145. Mg(2+)-binding residues include Asp-14, Glu-73, and Asp-145. The segment at 162–186 (GRSLPPSRGRRRSGSRQRWRDYRPS) is disordered. The segment covering 169–178 (RGRRRSGSRQ) has biased composition (basic residues).

This sequence belongs to the RuvC family. As to quaternary structure, homodimer which binds Holliday junction (HJ) DNA. The HJ becomes 2-fold symmetrical on binding to RuvC with unstacked arms; it has a different conformation from HJ DNA in complex with RuvA. In the full resolvosome a probable DNA-RuvA(4)-RuvB(12)-RuvC(2) complex forms which resolves the HJ. Mg(2+) serves as cofactor.

It is found in the cytoplasm. The enzyme catalyses Endonucleolytic cleavage at a junction such as a reciprocal single-stranded crossover between two homologous DNA duplexes (Holliday junction).. The RuvA-RuvB-RuvC complex processes Holliday junction (HJ) DNA during genetic recombination and DNA repair. Endonuclease that resolves HJ intermediates. Cleaves cruciform DNA by making single-stranded nicks across the HJ at symmetrical positions within the homologous arms, yielding a 5'-phosphate and a 3'-hydroxyl group; requires a central core of homology in the junction. The consensus cleavage sequence is 5'-(A/T)TT(C/G)-3'. Cleavage occurs on the 3'-side of the TT dinucleotide at the point of strand exchange. HJ branch migration catalyzed by RuvA-RuvB allows RuvC to scan DNA until it finds its consensus sequence, where it cleaves and resolves the cruciform DNA. The sequence is that of Crossover junction endodeoxyribonuclease RuvC from Chromohalobacter salexigens (strain ATCC BAA-138 / DSM 3043 / CIP 106854 / NCIMB 13768 / 1H11).